Consider the following 300-residue polypeptide: Bifunctional protein FolD (300 aa).

NADP(+) is bound by residues 169–171 (GRG), Ser-196, and Ile-237.

The protein belongs to the tetrahydrofolate dehydrogenase/cyclohydrolase family. In terms of assembly, homodimer.

It catalyses the reaction (6R)-5,10-methylene-5,6,7,8-tetrahydrofolate + NADP(+) = (6R)-5,10-methenyltetrahydrofolate + NADPH. The catalysed reaction is (6R)-5,10-methenyltetrahydrofolate + H2O = (6R)-10-formyltetrahydrofolate + H(+). It participates in one-carbon metabolism; tetrahydrofolate interconversion. In terms of biological role, catalyzes the oxidation of 5,10-methylenetetrahydrofolate to 5,10-methenyltetrahydrofolate and then the hydrolysis of 5,10-methenyltetrahydrofolate to 10-formyltetrahydrofolate. The chain is Bifunctional protein FolD from Clavibacter michiganensis subsp. michiganensis (strain NCPPB 382).